The sequence spans 418 residues: MAGSLPPCVVDCGTGYTKLGYAGNTEPQFIIPSCIAIRESAKVVDQAQRRVLRGVDDLDFFIGDEAIDKPTYATKWPIRHGIIEDWDLMERFMEQVVFKYLRAEPEDHYFLMTEPPLNTPENREYLAEIMFESFNVPGLYIAVQAVLALAASWTSRQVGERTLTGIVIDSGDGVTHVIPVAEGYVIGSCIKHIPIAGRDITYFIQQLLREREVGIPPEQSLETAKAIKEKYCYICPDIVKEFAKYDVDPRKWIKQYTGINAINQKKFVIDVGYERFLGPEIFFHPEFANPDFMESISDVVDEVIQNCPIDVRRPLYKNVVLSGGSTMFRDFGRRLQRDLKRVVDARLRLSEELSGGRIKPKPVEVQVVTHHMQRYAVWFGGSMLASTPEFFQVCHTKKDYEEYGPSICRHNPVFGVMS.

It belongs to the actin family. ARP3 subfamily. As to quaternary structure, interacts with the Arp2/3 complex composed of ARP2, ARP3, ARPC1B, ARPC1B/p41-ARC, ARPC2/p34-ARC, ARPC3/p21-ARC, ARPC4/p20-ARC and ARPC5/p16-ARC. Detected in fetal brain. Detected throughout the adult brain, in neurons from gray matter, but not in white matter. Detected in liver, skeletal muscle and pancreas. Detected in lung adenocarcinoma cells with low metastatic potential, but not in lung adenocarcinoma cells with high metastatic potential.

The protein localises to the cytoplasm. It localises to the cytoskeleton. Its subcellular location is the cell projection. Functionally, plays a role in the organization of the actin cytoskeleton. May function as ATP-binding component of the Arp2/3 complex which is involved in regulation of actin polymerization and together with an activating nucleation-promoting factor (NPF) mediates the formation of branched actin networks. May decrease the metastatic potential of tumors. The protein is Actin-related protein 3B (ACTR3B) of Homo sapiens (Human).